The following is a 565-amino-acid chain: MTENNQDLKQNWTRHREGVVRAARGTQLTAKTWMTEAPLRMLMNNLDPEVAENPNELVVYGGIGRAARNWECYDKIVESLTRLNDDETLLVQSGKPVGVFKTHSNAPRVLIANSNLVPHWASWEHFNELDAKGLAMYGQMTAGSWIYIGSQGIVQGTYETFVEAGRQHYDGNLKGRWVLTAGLGGMGGAQPLAATLAGACSLNIECQQSRIDFRIKTRYVDEQAADLDDALARIAKYTAEGKAISIALCGNAADILPEMVRRGVRPDMVTDQTSAHDPLNGYLPKGWTWDEYRARSVSEPAEVVKAAKQSMAEHVEAMLAFQQAGIPTFDYGNNIRQMAKEVGVSNAFDFPGFVPAYIRPLFCRGIGPFRWAALSGDPQDIYKTDAKVKELIPDDDHLHNWLDMARERISFQGLPARICWVGLGQRAKLGLAFNEMVRSGELSAPVVIGRDHLDSGSVASPNRETESMRDGSDAVSDWPLLNALLNTASGATWVSLHHGGGVGMGFSQHSGMVIVCDGTDEAAERIARVLHNDPATGVMRHADAGYDIAIDCAKEQGLNLPMIGR.

Residues 61 to 62, Gln-139, 185 to 187, Glu-205, Arg-210, 251 to 252, 272 to 276, 282 to 283, and Tyr-331 each bind NAD(+); these read GG, GMG, NA, QTSAH, and YL. Residue Cys-419 is part of the active site. Residues 453–472 are disordered; that stretch reads LDSGSVASPNRETESMRDGS. A compositionally biased stretch (basic and acidic residues) spans 463–472; sequence RETESMRDGS. Gly-501 is an NAD(+) binding site.

It belongs to the urocanase family. NAD(+) serves as cofactor.

The protein localises to the cytoplasm. It catalyses the reaction 4-imidazolone-5-propanoate = trans-urocanate + H2O. The protein operates within amino-acid degradation; L-histidine degradation into L-glutamate; N-formimidoyl-L-glutamate from L-histidine: step 2/3. Its function is as follows. Catalyzes the conversion of urocanate to 4-imidazolone-5-propionate. The chain is Urocanate hydratase from Pseudomonas syringae pv. tomato (strain ATCC BAA-871 / DC3000).